A 379-amino-acid polypeptide reads, in one-letter code: Lipid-A-disaccharide synthase (379 aa).

Belongs to the LpxB family.

It carries out the reaction a lipid X + a UDP-2-N,3-O-bis[(3R)-3-hydroxyacyl]-alpha-D-glucosamine = a lipid A disaccharide + UDP + H(+). The protein operates within bacterial outer membrane biogenesis; LPS lipid A biosynthesis. Functionally, condensation of UDP-2,3-diacylglucosamine and 2,3-diacylglucosamine-1-phosphate to form lipid A disaccharide, a precursor of lipid A, a phosphorylated glycolipid that anchors the lipopolysaccharide to the outer membrane of the cell. The chain is Lipid-A-disaccharide synthase from Vibrio cholerae serotype O1 (strain ATCC 39541 / Classical Ogawa 395 / O395).